The primary structure comprises 239 residues: Putative ABC transporter ATP-binding protein BR1368/BS1330_I1363 (239 aa).

One can recognise an ABC transporter domain in the interval 5–234 (LSLDRVSVSR…EQVHLHYVEA (230 aa)). 37–44 (GDNGVGKT) is an ATP binding site.

It belongs to the ABC transporter superfamily.

The protein resides in the cell inner membrane. Functionally, probably part of an ABC transporter complex. Responsible for energy coupling to the transport system. The chain is Putative ABC transporter ATP-binding protein BR1368/BS1330_I1363 from Brucella suis biovar 1 (strain 1330).